Consider the following 523-residue polypeptide: Glycerate kinase (523 aa).

Residue S60 is modified to Phosphoserine. K200 carries the post-translational modification N6-acetyllysine.

It belongs to the glycerate kinase type-2 family. Expressed in the hippocampus, callus, brain, cerebellum, renal cortex interstitial cells, epithelium of interlobular bile duct and skeletal muscle.

The protein resides in the cytoplasm. The enzyme catalyses (R)-glycerate + ATP = (2R)-3-phosphoglycerate + ADP + H(+). The chain is Glycerate kinase (Glyctk) from Mus musculus (Mouse).